A 270-amino-acid polypeptide reads, in one-letter code: Chlorophyll a-b binding protein 7, chloroplastic (270 aa).

The transit peptide at 1 to 42 directs the protein to the chloroplast; that stretch reads MASACASSTIAAVAFSSPSSRRNGSIVGTTKASFLGGRRLRV. A chlorophyll b-binding site is contributed by tryptophan 68. Phenylalanine 88, glutamate 107, and histidine 110 together coordinate chlorophyll a. Arginine 112 contributes to the chlorophyll b binding site. Residues 113–133 form a helical membrane-spanning segment; the sequence is WAMLGAAGIFIPELLTKIGIL. Glutamine 144 provides a ligand contact to chlorophyll a. The helical transmembrane segment at 146–166 threads the bilayer; sequence YFTDTTTLFIVELVLIGWAEG. Chlorophyll b is bound by residues isoleucine 155, glutamate 165, and arginine 168. Residues lysine 221, glutamate 222, asparagine 225, arginine 227, glutamine 239, and histidine 254 each coordinate chlorophyll a. Residues 228–248 traverse the membrane as a helical segment; sequence LAMLAVMGAWFQHIYTGTGPI.

It belongs to the light-harvesting chlorophyll a/b-binding (LHC) protein family. As to quaternary structure, the LHC complex consists of chlorophyll a-b binding proteins. Binds at least 14 chlorophylls (8 Chl-a and 6 Chl-b) and carotenoids such as lutein and neoxanthin. serves as cofactor. In terms of processing, photoregulated by reversible phosphorylation of its threonine residues.

It localises to the plastid. The protein resides in the chloroplast thylakoid membrane. Functionally, the light-harvesting complex (LHC) functions as a light receptor, it captures and delivers excitation energy to photosystems with which it is closely associated. The chain is Chlorophyll a-b binding protein 7, chloroplastic (CAB7) from Solanum lycopersicum (Tomato).